Reading from the N-terminus, the 318-residue chain is GTP 3',8-cyclase (318 aa).

Residues 4 to 218 form the Radical SAM core domain; sequence KHGRNIDYLR…MSRSDLIPIE (215 aa). Residue arginine 13 participates in GTP binding. Residues cysteine 20 and cysteine 24 each coordinate [4Fe-4S] cluster. Tyrosine 26 lines the S-adenosyl-L-methionine pocket. Cysteine 27 contributes to the [4Fe-4S] cluster binding site. Arginine 62 is a GTP binding site. Glycine 66 is an S-adenosyl-L-methionine binding site. Threonine 93 is a binding site for GTP. Residue serine 117 coordinates S-adenosyl-L-methionine. Lysine 154 contacts GTP. Methionine 188 contacts S-adenosyl-L-methionine. 2 residues coordinate [4Fe-4S] cluster: cysteine 248 and cysteine 251. Position 253 to 255 (253 to 255) interacts with GTP; sequence KIR. Cysteine 265 is a [4Fe-4S] cluster binding site.

The protein belongs to the radical SAM superfamily. MoaA family. In terms of assembly, monomer and homodimer. [4Fe-4S] cluster serves as cofactor.

It catalyses the reaction GTP + AH2 + S-adenosyl-L-methionine = (8S)-3',8-cyclo-7,8-dihydroguanosine 5'-triphosphate + 5'-deoxyadenosine + L-methionine + A + H(+). It participates in cofactor biosynthesis; molybdopterin biosynthesis. In terms of biological role, catalyzes the cyclization of GTP to (8S)-3',8-cyclo-7,8-dihydroguanosine 5'-triphosphate. The protein is GTP 3',8-cyclase of Clostridium acetobutylicum (strain ATCC 824 / DSM 792 / JCM 1419 / IAM 19013 / LMG 5710 / NBRC 13948 / NRRL B-527 / VKM B-1787 / 2291 / W).